The primary structure comprises 110 residues: B3 domain-containing protein LOC_Os02g10420 (110 aa).

The TF-B3 DNA-binding region spans 1 to 104 (MSAMLNENVP…VLSVTVHKAD (104 aa)).

It localises to the nucleus. This chain is B3 domain-containing protein LOC_Os02g10420, found in Oryza sativa subsp. japonica (Rice).